Consider the following 181-residue polypeptide: Adenine phosphoribosyltransferase (181 aa).

It belongs to the purine/pyrimidine phosphoribosyltransferase family. Homodimer.

Its subcellular location is the cytoplasm. It catalyses the reaction AMP + diphosphate = 5-phospho-alpha-D-ribose 1-diphosphate + adenine. It participates in purine metabolism; AMP biosynthesis via salvage pathway; AMP from adenine: step 1/1. In terms of biological role, catalyzes a salvage reaction resulting in the formation of AMP, that is energically less costly than de novo synthesis. This Neorhizobium galegae (Rhizobium galegae) protein is Adenine phosphoribosyltransferase.